A 64-amino-acid polypeptide reads, in one-letter code: Large ribosomal subunit protein bL35 (64 aa).

It belongs to the bacterial ribosomal protein bL35 family.

The polypeptide is Large ribosomal subunit protein bL35 (Pelodictyon phaeoclathratiforme (strain DSM 5477 / BU-1)).